We begin with the raw amino-acid sequence, 509 residues long: Putative cytochrome P450 CYP13A8 (509 aa).

C455 is a binding site for heme.

It belongs to the cytochrome P450 family. Requires heme as cofactor.

Functionally, cytochromes P450 are a group of heme-thiolate monooxygenases. They oxidize a variety of structurally unrelated compounds, including steroids, fatty acids, and xenobiotics. The sequence is that of Putative cytochrome P450 CYP13A8 (cyp-13A8) from Caenorhabditis elegans.